The following is a 158-amino-acid chain: Large ribosomal subunit protein uL30 (158 aa).

The protein belongs to the universal ribosomal protein uL30 family. In terms of assembly, part of the 50S ribosomal subunit.

The sequence is that of Large ribosomal subunit protein uL30 from Saccharolobus islandicus (strain Y.G.57.14 / Yellowstone #1) (Sulfolobus islandicus).